Consider the following 147-residue polypeptide: Hemoglobin subunit beta (147 aa).

At V2 the chain carries N-acetylvaline. The Globin domain occupies 3–147 (HLTGEEKSAV…VANALAHKYH (145 aa)). Residue T13 is modified to Phosphothreonine. S45 carries the phosphoserine modification. N6-acetyllysine is present on K60. H64 serves as a coordination point for heme b. K83 is subject to N6-acetyllysine. H93 is a binding site for heme b. At C94 the chain carries S-nitrosocysteine. The residue at position 145 (K145) is an N6-acetyllysine.

This sequence belongs to the globin family. In terms of assembly, heterotetramer of two alpha chains and two beta chains. In terms of tissue distribution, red blood cells.

Functionally, involved in oxygen transport from the lung to the various peripheral tissues. The polypeptide is Hemoglobin subunit beta (HBB) (Callimico goeldii (Goeldi's marmoset)).